Here is a 452-residue protein sequence, read N- to C-terminus: Argininosuccinate lyase (452 aa).

The disordered stretch occupies residues 431-452 (AFRKDSTGSTSPKWSFRAMRRA).

The protein belongs to the lyase 1 family. Argininosuccinate lyase subfamily.

It localises to the cytoplasm. It carries out the reaction 2-(N(omega)-L-arginino)succinate = fumarate + L-arginine. It participates in amino-acid biosynthesis; L-arginine biosynthesis; L-arginine from L-ornithine and carbamoyl phosphate: step 3/3. This chain is Argininosuccinate lyase, found in Tremblaya princeps.